A 265-amino-acid chain; its full sequence is Tyrosine protein kinase-interacting protein (265 aa).

Positions 1–14 (MANEGEEIELTEFP) are enriched in acidic residues. The tract at residues 1-49 (MANEGEEIELTEFPETEKERKDEEKLSSCSEETTDTSSSSSSDHVPAPI) is disordered. Topologically, residues 1–238 (MANEGEEIEL…LKRLENKVNA (238 aa)) are cytoplasmic. Over residues 15 to 26 (ETEKERKDEEKL) the composition is skewed to basic and acidic residues. Residues 27-43 (SSCSEETTDTSSSSSSD) are compositionally biased toward low complexity. Tyrosine 123 carries the post-translational modification Phosphotyrosine; by host LCK. Residue tyrosine 136 is modified to Phosphotyrosine; by host. Residues 155-164 (EDLQSFLEKY) form a CSKH/LBD2 region. Residues 172 to 192 (KRDLSATWDPGMPTPALPPRP) form a disordered region. The SH3B/LBD1 stretch occupies residues 183-192 (MPTPALPPRP). Over residues 183 to 192 (MPTPALPPRP) the composition is skewed to pro residues. Residues 225–234 (IVKDLKRLEN) are SH3 binding. The chain crosses the membrane as a helical span at residues 239–259 (IICLVVVILAVLLLVTVLSIL). The Extracellular segment spans residues 260–265 (HIGMKS).

As to quaternary structure, binds host LCK, human WDR48 and human NXF1/TAP. Forms a complex with activated LCK and STAT1 and STAT3. Post-translationally, phosphorylation on Tyr-123 acts as a docking site for the recruitment of STATs 1 and 3.

It is found in the host cell membrane. Functionally, plays a critical role in virus induced T-cell transformation. Binds to T-cell-specific tyrosine kinase LCK SH2 and SH3 domains, thereby activating its kinase activity. Once phosphorylated by host LCK, forms a complex with at least STAT 1 and 3, resulting on the phosphorylation of STAT3 and presumably STAT1, and their migration into the nucleus to induce transcription of target genes. Stimulates host ILF3/NF-AT-90 activity. Association with host NXF1/TAP transduces the signal up-regulating surface expression of adhesion molecules as well as activating NF-kappa-B activity. Acts synergistically with StpC to stimulate NF-kappa-B activity and interleukin-2 gene expression. Activation of NF-kappa-B protects lymphocytes from apoptosis, thereby facilitating viral induced cell transformation. May cause down-regulation of host LCK and cell apoptosis when stably overexpressed ex vivo. Interaction with WDR48 induce degradation of T-cell receptor in a lysosome-dependent fashion, when both proteins are overexpressed. The biological effect of this interaction remains controversial since no T-cell receptor degradation is observed in infected cells. The chain is Tyrosine protein kinase-interacting protein from Saimiriine herpesvirus 2 (strain 484) (SaHV-2).